The following is a 331-amino-acid chain: Phosphoenolpyruvate transferase (331 aa).

D63 contributes to the 7,8-didemethyl-8-hydroxy-5-deazariboflavin binding site.

This sequence belongs to the CofD family. In terms of assembly, homodimer. Mg(2+) is required as a cofactor.

It catalyses the reaction enolpyruvoyl-2-diphospho-5'-guanosine + 7,8-didemethyl-8-hydroxy-5-deazariboflavin = dehydro coenzyme F420-0 + GMP + H(+). Its pathway is cofactor biosynthesis; coenzyme F420 biosynthesis. Catalyzes the transfer of the phosphoenolpyruvate moiety from enoylpyruvoyl-2-diphospho-5'-guanosine (EPPG) to 7,8-didemethyl-8-hydroxy-5-deazariboflavin (FO) with the formation of dehydro coenzyme F420-0 and GMP. This chain is Phosphoenolpyruvate transferase, found in Mycobacterium sp. (strain JLS).